Reading from the N-terminus, the 566-residue chain is Mucolipin-2 (566 aa).

The Cytoplasmic portion of the chain corresponds to 1–65; that stretch reads MPGDEETLDL…YRARRQIPWK (65 aa). Residues 66–86 traverse the membrane as a helical segment; sequence LGLQILKIVMVTTQLVRFGLS. Residues 87 to 288 lie on the Extracellular side of the membrane; the sequence is NQLVVAFKED…ISGSTQRSTH (202 aa). The segment at 107-123 is extracellular/lumenal pore loop; the sequence is KGFSGVDEDDYSCSIYT. Cystine bridges form between cysteine 164–cysteine 190 and cysteine 243–cysteine 274. A helical membrane pass occupies residues 289-309; that stretch reads YLLVFDVFVIMICLASLILCT. The Cytoplasmic portion of the chain corresponds to 310-346; the sequence is RSIVLALRLRKRFLNFFLEKYKQRVCGADQWEFVNGW. Residues 347–367 form a helical membrane-spanning segment; sequence YVLVTISDLMTIIGSILKMEI. At 368-376 the chain is on the extracellular side; the sequence is KAKKLTNYD. The chain crosses the membrane as a helical span at residues 377–397; that stretch reads VCSILLGTSTLFVWVGVIRYL. The Cytoplasmic portion of the chain corresponds to 398–419; it reads GYFQTYNVLILTMQASLPKVLR. Residues 420-440 traverse the membrane as a helical segment; it reads FCACAGMIYLGYTFCGWIVLG. The Extracellular segment spans residues 441–448; that stretch reads PYHEKFEN. Residues 449-469 constitute an intramembrane region (pore-forming); sequence LNIVAECLFSLVNGDDMFATF. Positions 461 to 464 match the Selectivity filter motif; the sequence is NGDD. Residues 470 to 480 lie on the Extracellular side of the membrane; it reads AQIQQKSILVW. The helical transmembrane segment at 481 to 502 threads the bilayer; it reads LFSRLYLYSFISLFIYMVLSLF. Over 503 to 566 the chain is Cytoplasmic; that stretch reads IALITDSYHT…RSNDHLILID (64 aa).

It belongs to the transient receptor (TC 1.A.4) family. Polycystin subfamily. MCOLN2 sub-subfamily. In terms of assembly, forms homooligomeric complexes; probably tetrameric. Can heterooligomerize with MCOLN1; heteromeric assemblies have different channel properties as compared to the respective homooligomers and may be tissue-specific. Interacts with TMEM176A. As to expression, expressed in activated macrophages and microglia (at protein level). Isoform 1 is widely expressed at very low levels. In terms of tissue distribution, isoform 2 is expressed at high levels in lymphoid tissues (thymus and spleen) and kidney, and at moderate levels in heart, lung, liver and stomach.

The protein resides in the cell membrane. The protein localises to the lysosome membrane. Its subcellular location is the recycling endosome membrane. The catalysed reaction is Ca(2+)(in) = Ca(2+)(out). The enzyme catalyses Fe(2+)(in) = Fe(2+)(out). With respect to regulation, fe(2+) channel activity is potentiated by low pH. Functionally, nonselective cation channel probably playing a role in the regulation of membrane trafficking events. Acts as a Ca(2+)-permeable cation channel with inwardly rectifying activity. May activate ARF6 and be involved in the trafficking of GPI-anchored cargo proteins to the cell surface via the ARF6-regulated recycling pathway. May play a role in immune processes. In adaptive immunity, TRPML2 and TRPML1 may play redundant roles in the function of the specialized lysosomes of B cells. In the innate immune response, may play a role in the regulation of chemokine secretion and macrophage migration. Through a possible and probably tissue-specific heteromerization with MCOLN1 may be at least in part involved in many lysosome-dependent cellular events. Also functions as a Fe(2+) permeable channel. The chain is Mucolipin-2 (Mcoln2) from Mus musculus (Mouse).